A 32-amino-acid chain; its full sequence is Cytochrome b6-f complex subunit 8 (32 aa).

The helical transmembrane segment at 6 to 26 (IVGITWAALMVVFTFSLSLVV) threads the bilayer.

It belongs to the PetN family. In terms of assembly, the 4 large subunits of the cytochrome b6-f complex are cytochrome b6, subunit IV (17 kDa polypeptide, PetD), cytochrome f and the Rieske protein, while the 4 small subunits are PetG, PetL, PetM and PetN. The complex functions as a dimer.

It localises to the plastid. It is found in the chloroplast thylakoid membrane. Component of the cytochrome b6-f complex, which mediates electron transfer between photosystem II (PSII) and photosystem I (PSI), cyclic electron flow around PSI, and state transitions. The protein is Cytochrome b6-f complex subunit 8 of Pinus koraiensis (Korean pine).